The primary structure comprises 307 residues: Porphobilinogen deaminase (307 aa).

Cys-241 carries the S-(dipyrrolylmethanemethyl)cysteine modification.

Belongs to the HMBS family. In terms of assembly, monomer. Dipyrromethane serves as cofactor.

It carries out the reaction 4 porphobilinogen + H2O = hydroxymethylbilane + 4 NH4(+). The protein operates within porphyrin-containing compound metabolism; protoporphyrin-IX biosynthesis; coproporphyrinogen-III from 5-aminolevulinate: step 2/4. Tetrapolymerization of the monopyrrole PBG into the hydroxymethylbilane pre-uroporphyrinogen in several discrete steps. The protein is Porphobilinogen deaminase of Coxiella burnetii (strain CbuK_Q154) (Coxiella burnetii (strain Q154)).